We begin with the raw amino-acid sequence, 247 residues long: Myelin-oligodendrocyte glycoprotein (247 aa).

The signal sequence occupies residues 1–29; it reads MASLSRPSLPSCLCSFLLLLLLQVSSSYA. Topologically, residues 30 to 154 are extracellular; that stretch reads GQFRVIGPRH…EDPFYWVSPG (125 aa). Positions 32 to 145 constitute an Ig-like V-type domain; the sequence is FRVIGPRHPI…EEAAMELKVE (114 aa). Cysteine 53 and cysteine 127 are joined by a disulfide. Asparagine 60 carries an N-linked (GlcNAc...) asparagine glycan. The chain crosses the membrane as a helical span at residues 155 to 175; the sequence is VLVLLAVLPVLLLQITVGLIF. Over 176 to 210 the chain is Cytoplasmic; that stretch reads LCLQYRLRGKLRAEIENLHRTFDPHFLRVPCWKIT. A helical membrane pass occupies residues 211–231; that stretch reads LFVIVPVLGPLVALIICYNWL. Residues 232–247 lie on the Extracellular side of the membrane; sequence HRRLAGQFLEELRNPF.

This sequence belongs to the immunoglobulin superfamily. BTN/MOG family. As to quaternary structure, homodimer. May form heterodimers between the different isoforms. (Microbial infection) Interacts with rubella virus E2 glycoprotein. As to expression, found exclusively in the CNS, where it is localized on the surface of myelin and oligodendrocyte cytoplasmic membranes.

Its subcellular location is the cell membrane. Its function is as follows. Mediates homophilic cell-cell adhesion. Minor component of the myelin sheath. May be involved in completion and/or maintenance of the myelin sheath and in cell-cell communication. (Microbial infection) Acts as a receptor for rubella virus. The polypeptide is Myelin-oligodendrocyte glycoprotein (MOG) (Homo sapiens (Human)).